The sequence spans 185 residues: Ribosome-recycling factor (185 aa).

It belongs to the RRF family.

The protein resides in the cytoplasm. Functionally, responsible for the release of ribosomes from messenger RNA at the termination of protein biosynthesis. May increase the efficiency of translation by recycling ribosomes from one round of translation to another. The polypeptide is Ribosome-recycling factor (Neisseria gonorrhoeae (strain ATCC 700825 / FA 1090)).